The primary structure comprises 875 residues: Valine--tRNA ligase (875 aa).

Residues 45–55 (PNVTGVLHMGH) carry the 'HIGH' region motif. The short motif at 524-528 (KMSKS) is the 'KMSKS' region element. Lys-527 lines the ATP pocket. Residues 803-837 (VKLLIDKTKELIRLEKQLEKYKMLKISVSKKLENE) adopt a coiled-coil conformation.

The protein belongs to the class-I aminoacyl-tRNA synthetase family. ValS type 1 subfamily. Monomer.

Its subcellular location is the cytoplasm. The enzyme catalyses tRNA(Val) + L-valine + ATP = L-valyl-tRNA(Val) + AMP + diphosphate. Catalyzes the attachment of valine to tRNA(Val). As ValRS can inadvertently accommodate and process structurally similar amino acids such as threonine, to avoid such errors, it has a 'posttransfer' editing activity that hydrolyzes mischarged Thr-tRNA(Val) in a tRNA-dependent manner. This chain is Valine--tRNA ligase, found in Borrelia garinii subsp. bavariensis (strain ATCC BAA-2496 / DSM 23469 / PBi) (Borreliella bavariensis).